We begin with the raw amino-acid sequence, 68 residues long: Putative membrane protein insertion efficiency factor (68 aa).

Belongs to the UPF0161 family.

The protein resides in the cell inner membrane. Its function is as follows. Could be involved in insertion of integral membrane proteins into the membrane. The sequence is that of Putative membrane protein insertion efficiency factor from Hydrogenobaculum sp. (strain Y04AAS1).